The sequence spans 204 residues: Ribosome maturation factor RimP (204 aa).

Belongs to the RimP family.

It is found in the cytoplasm. Required for maturation of 30S ribosomal subunits. In Albidiferax ferrireducens (strain ATCC BAA-621 / DSM 15236 / T118) (Rhodoferax ferrireducens), this protein is Ribosome maturation factor RimP.